The chain runs to 385 residues: Heat-inducible transcription repressor HrcA (385 aa).

Belongs to the HrcA family.

In terms of biological role, negative regulator of class I heat shock genes (grpE-dnaK-dnaJ and groELS operons). Prevents heat-shock induction of these operons. This chain is Heat-inducible transcription repressor HrcA, found in Protochlamydia amoebophila (strain UWE25).